The sequence spans 126 residues: Small ribosomal subunit protein uS13c (126 aa).

Positions 100-126 (GQRTRTNARTRRGARQTVAGKKKAPSK) are disordered. The span at 101-126 (QRTRTNARTRRGARQTVAGKKKAPSK) shows a compositional bias: basic residues.

Belongs to the universal ribosomal protein uS13 family. As to quaternary structure, part of the 30S ribosomal subunit.

It localises to the plastid. It is found in the cyanelle. Located at the top of the head of the 30S subunit, it contacts several helices of the 16S rRNA. The chain is Small ribosomal subunit protein uS13c from Cyanophora paradoxa.